The primary structure comprises 455 residues: tRNA modification GTPase MnmE (455 aa).

(6S)-5-formyl-5,6,7,8-tetrahydrofolate contacts are provided by arginine 24, glutamate 81, and lysine 120. The TrmE-type G domain occupies glycine 216–glycine 378. Position 226 (asparagine 226) interacts with K(+). GTP contacts are provided by residues asparagine 226 to serine 231, threonine 245 to threonine 251, aspartate 270 to glycine 273, asparagine 335 to aspartate 338, and serine 359 to arginine 361. Serine 230 serves as a coordination point for Mg(2+). Residues threonine 245, isoleucine 247, and threonine 250 each contribute to the K(+) site. Threonine 251 serves as a coordination point for Mg(2+). (6S)-5-formyl-5,6,7,8-tetrahydrofolate is bound at residue lysine 455.

This sequence belongs to the TRAFAC class TrmE-Era-EngA-EngB-Septin-like GTPase superfamily. TrmE GTPase family. Homodimer. Heterotetramer of two MnmE and two MnmG subunits. It depends on K(+) as a cofactor.

It is found in the cytoplasm. Its function is as follows. Exhibits a very high intrinsic GTPase hydrolysis rate. Involved in the addition of a carboxymethylaminomethyl (cmnm) group at the wobble position (U34) of certain tRNAs, forming tRNA-cmnm(5)s(2)U34. This is tRNA modification GTPase MnmE from Pseudomonas aeruginosa (strain ATCC 15692 / DSM 22644 / CIP 104116 / JCM 14847 / LMG 12228 / 1C / PRS 101 / PAO1).